A 218-amino-acid chain; its full sequence is Pyridoxal phosphate homeostasis protein (218 aa).

Position 25 is an N6-(pyridoxal phosphate)lysine (K25).

This sequence belongs to the pyridoxal phosphate-binding protein YggS/PROSC family.

Its function is as follows. Pyridoxal 5'-phosphate (PLP)-binding protein, which is involved in PLP homeostasis. This Synechocystis sp. (strain ATCC 27184 / PCC 6803 / Kazusa) protein is Pyridoxal phosphate homeostasis protein.